A 133-amino-acid chain; its full sequence is Small ribosomal subunit protein uS19 (133 aa).

The protein belongs to the universal ribosomal protein uS19 family.

In terms of biological role, protein S19 forms a complex with S13 that binds strongly to the 16S ribosomal RNA. This chain is Small ribosomal subunit protein uS19, found in Thermococcus sibiricus (strain DSM 12597 / MM 739).